A 245-amino-acid chain; its full sequence is MAGVGIRSYACHRQTRRLLDGDVLMSPGPGNTDMPQTKSSPIAHPYPGRLITLDGIDGVGKSSQIEILAERLRSEGRNVLCVRDPGSTDLGTKLRAMLLDSDLEMHRRTEAMLFMASRCEMIESTLRSALADGVTVISDRFLLANVVYQSVGGEVDAQTLWQLGRLACGGVQPDVTLLLDLPAEISMQRVGGEADRMESRGVDYMAKVRQAFLDELPNAGGRTHVIDASGTIEEVAETIAAIELF.

ATP is bound at residue 55–62; it reads GIDGVGKS.

It belongs to the thymidylate kinase family.

It carries out the reaction dTMP + ATP = dTDP + ADP. Its function is as follows. Phosphorylation of dTMP to form dTDP in both de novo and salvage pathways of dTTP synthesis. This Rhodopirellula baltica (strain DSM 10527 / NCIMB 13988 / SH1) protein is Thymidylate kinase.